The primary structure comprises 806 residues: Ent-atiserene synthase KSL4, chloroplastic (806 aa).

Residues 1–75 (MGIVALILIK…AKLFKKNEVC (75 aa)) constitute a chloroplast transit peptide. Residues 33–56 (ASLAGSGLPKTTPPKTASLQSHSP) form a disordered region. Residues 45 to 55 (PPKTASLQSHS) show a composition bias toward polar residues. The Mg(2+) site is built by Asp-556, Asp-560, Asn-700, and Glu-708. The short motif at 556-560 (DDLFD) is the DDXXD motif element.

This sequence belongs to the terpene synthase family. The cofactor is Mg(2+). Highly expressed in leaves, and, at low levels, in roots, stems and flowers.

It is found in the plastid. The protein localises to the chloroplast. The catalysed reaction is ent-copalyl diphosphate = ent-atiserene + diphosphate. It participates in secondary metabolite biosynthesis; terpenoid biosynthesis. In terms of biological role, involved in the biosynthesis of ent-kaurene diterpenoids natural products such as oridonin, miltiradiene, eriocalyxin B and nezukol, known to exhibit antitumor, anti-inflammatory and antibacterial activities. Catalyzes the conversion of ent-copalyl diphosphate (ent-CPP) to ent-atiserene. The sequence is that of Ent-atiserene synthase KSL4, chloroplastic from Isodon rubescens (Rabdosia rubescens).